Consider the following 376-residue polypeptide: Erythronate-4-phosphate dehydrogenase (376 aa).

2 residues coordinate substrate: S45 and T67. D147 lines the NAD(+) pocket. R209 is a catalytic residue. D233 is an NAD(+) binding site. Residue E238 is part of the active site. Residue H255 is the Proton donor of the active site. G258 serves as a coordination point for NAD(+). Y259 contacts substrate.

This sequence belongs to the D-isomer specific 2-hydroxyacid dehydrogenase family. PdxB subfamily. In terms of assembly, homodimer.

The protein localises to the cytoplasm. It catalyses the reaction 4-phospho-D-erythronate + NAD(+) = (R)-3-hydroxy-2-oxo-4-phosphooxybutanoate + NADH + H(+). The protein operates within cofactor biosynthesis; pyridoxine 5'-phosphate biosynthesis; pyridoxine 5'-phosphate from D-erythrose 4-phosphate: step 2/5. Functionally, catalyzes the oxidation of erythronate-4-phosphate to 3-hydroxy-2-oxo-4-phosphonooxybutanoate. The protein is Erythronate-4-phosphate dehydrogenase of Shewanella sp. (strain ANA-3).